Here is a 221-residue protein sequence, read N- to C-terminus: UPF0502 protein Sputw3181_2381 (221 aa).

The protein belongs to the UPF0502 family.

The protein is UPF0502 protein Sputw3181_2381 of Shewanella sp. (strain W3-18-1).